Reading from the N-terminus, the 794-residue chain is Copper amine oxidase-like protein cao2 (794 aa).

Substrate is bound by residues 307–318 (AYDLGEYGVGYR) and 391–396 (AANYEY). The Proton acceptor role is filled by D309. Y394 (schiff-base intermediate with substrate; via topaquinone) is an active-site residue. At Y394 the chain carries 2',4',5'-topaquinone. Residues H445 and H447 each coordinate Cu cation. The segment at 563–584 (GDYAPQASDDTPKGLSKWISDD) is disordered. Residues D593 and I594 each contribute to the Mn(2+) site. H604 contributes to the Cu cation binding site. The segment at 634–748 (ALDTSSSVNS…NGGHHHHHHH (115 aa)) is disordered. Residues 637 to 649 (TSSSVNSTSEATS) are compositionally biased toward low complexity. The segment covering 652–714 (THHENLRDTS…DAAQKHEGRS (63 aa)) has biased composition (basic and acidic residues). Over residues 716 to 727 (TLAQPGQQNANQ) the composition is skewed to polar residues.

The protein belongs to the copper/topaquinone oxidase family. As to quaternary structure, homodimer. Requires Cu cation as cofactor. Zn(2+) serves as cofactor. The cofactor is L-topaquinone. It depends on Mn(2+) as a cofactor. Post-translationally, topaquinone (TPQ) is generated by copper-dependent autoxidation of a specific tyrosyl residue.

It is found in the cytoplasm. The catalysed reaction is a primary methyl amine + O2 + H2O = an aldehyde + H2O2 + NH4(+). In terms of biological role, copper amine oxidase-like protein that does not show any copper amine oxidase activity. May be the appropriate amine substrate for cao2 has not been identified yet. The protein is Copper amine oxidase-like protein cao2 (cao2) of Schizosaccharomyces pombe (strain 972 / ATCC 24843) (Fission yeast).